Consider the following 144-residue polypeptide: Probable low molecular weight protein-tyrosine-phosphatase AmsI (144 aa).

Cys9 acts as the Nucleophile in catalysis. Arg15 is a catalytic residue. The active-site Proton donor is the Asp115.

Belongs to the low molecular weight phosphotyrosine protein phosphatase family.

It catalyses the reaction O-phospho-L-tyrosyl-[protein] + H2O = L-tyrosyl-[protein] + phosphate. In terms of biological role, may function as a phosphatase required for amylovoran (an exopolysaccharide that functions as a virulence factor) production. The protein is Probable low molecular weight protein-tyrosine-phosphatase AmsI (amsI) of Erwinia amylovora (Fire blight bacteria).